The chain runs to 4076 residues: E3 ubiquitin-protein ligase TOM1-like (4076 aa).

Positions 225-237 are enriched in low complexity; that stretch reads SSAAPAVSAGSTA. 17 disordered regions span residues 225–256, 288–360, 748–819, 921–970, 1083–1103, 1571–1646, 1988–2041, 2067–2110, 2275–2295, 2356–2551, 2581–2634, 2782–2817, 2858–2955, 3037–3066, 3105–3132, 3216–3241, and 3353–3444; these read SSAA…KNVA, YPDT…RDGP, IPAE…ILPS, LEAP…NKPA, SPVQ…SSGT, MALD…ITRE, PADA…KRPI, NVPA…KLAK, EGDK…IGRS, SGTA…ELDY, GDDL…LLAP, IPIP…ESTH, EKAR…QAED, EQHE…ASIL, RQLH…GAGT, KQLK…NNNG, and EEQA…QLTP. Residues 238–250 are compositionally biased toward basic and acidic residues; sequence KAKDKEKEKEKAT. The span at 311 to 320 shows a compositional bias: low complexity; that stretch reads TTSSPAAPTP. Residues 322 to 343 show a composition bias toward polar residues; that stretch reads RRSSTMNVSQSSRTQRVGSSEE. Residues 767–778 are compositionally biased toward acidic residues; the sequence is EGNDADDDSEDD. Basic and acidic residues predominate over residues 940-950; sequence VKGKGKEKATD. Positions 959-969 are enriched in polar residues; sequence ASSSSSGNNKP. Over residues 1606–1620 the composition is skewed to polar residues; the sequence is PGTSRETNVGASTTA. The segment covering 1621-1632 has biased composition (low complexity); it reads PQQLPVLPSQQP. Positions 1633–1642 are enriched in polar residues; that stretch reads ATESQSNTPR. Over residues 2021 to 2041 the composition is skewed to basic and acidic residues; the sequence is VTDKDMHDAPKNPAQDLKRPI. Positions 2086–2096 are enriched in polar residues; it reads NEATPSPSGDE. The segment covering 2099–2110 has biased composition (basic and acidic residues); the sequence is SESKEKEKKLAK. Composition is skewed to acidic residues over residues 2378-2387 and 2405-2450; these read DLTDDREETP and EFSD…DLGE. Over residues 2460-2469 the composition is skewed to low complexity; that stretch reads QPGVVEVLMG. 2 stretches are compositionally biased toward acidic residues: residues 2470–2516 and 2523–2551; these read ENDD…DLED and EEGN…ELDY. A compositionally biased stretch (basic and acidic residues) spans 2587-2597; that stretch reads EPIRDFDGHYI. Positions 2598–2622 are enriched in acidic residues; it reads DDDEDGEEDDDEDEGEDDMDDDMYF. 2 stretches are compositionally biased toward basic and acidic residues: residues 2788–2803 and 2858–2912; these read HSRE…DTYQ and EKAR…ERAE. Positions 2851–2929 form a coiled coil; the sequence is AIQAEKEEKA…QAAADQEANA (79 aa). Residues 2913 to 2927 are compositionally biased toward low complexity; sequence AAAQAAAQAAADQEA. Residues 3037 to 3047 show a composition bias toward basic and acidic residues; sequence EQHEQRRRERQ. Polar residues predominate over residues 3108 to 3117; sequence HAQQGGQAAS. A coiled-coil region spans residues 3341 to 3375; that stretch reads PLQAIERRRKEAEEQAKKKKEAEEKAATEREAANA. A compositionally biased stretch (basic and acidic residues) spans 3353–3372; that stretch reads EEQAKKKKEAEEKAATEREA. Over residues 3373-3414 the composition is skewed to low complexity; it reads ANAPEEQASTSTEQTPAQQEATQQPSESTPAAASGQQPAQQD. Residues 3415–3439 are compositionally biased toward basic and acidic residues; that stretch reads QENKELEAPKEKADEKDVQSDEKKI. The HECT domain maps to 3740-4076; it reads KADELKFGKL…TAGSDYFGFA (337 aa). The active-site Glycyl thioester intermediate is Cys-4043.

The protein belongs to the UPL family. TOM1/PTR1 subfamily.

It localises to the nucleus. It carries out the reaction S-ubiquitinyl-[E2 ubiquitin-conjugating enzyme]-L-cysteine + [acceptor protein]-L-lysine = [E2 ubiquitin-conjugating enzyme]-L-cysteine + N(6)-ubiquitinyl-[acceptor protein]-L-lysine.. Its pathway is protein modification; protein ubiquitination. Probable ubiquitin ligase protein, which may be involved in mRNA export. E3 ubiquitin ligase proteins mediate ubiquitination and subsequent proteasomal degradation of target proteins. Participates in mRNA export from the nucleus by regulating the transport of hnRNP proteins. In Neurospora crassa (strain ATCC 24698 / 74-OR23-1A / CBS 708.71 / DSM 1257 / FGSC 987), this protein is E3 ubiquitin-protein ligase TOM1-like.